Here is a 418-residue protein sequence, read N- to C-terminus: Serine hydroxymethyltransferase (418 aa).

(6S)-5,6,7,8-tetrahydrofolate is bound by residues L120 and 124-126 (GHL). N6-(pyridoxal phosphate)lysine is present on K229. Residue 353–355 (SPF) coordinates (6S)-5,6,7,8-tetrahydrofolate.

Belongs to the SHMT family. As to quaternary structure, homodimer. Pyridoxal 5'-phosphate is required as a cofactor.

The protein localises to the cytoplasm. The catalysed reaction is (6R)-5,10-methylene-5,6,7,8-tetrahydrofolate + glycine + H2O = (6S)-5,6,7,8-tetrahydrofolate + L-serine. The protein operates within one-carbon metabolism; tetrahydrofolate interconversion. Its pathway is amino-acid biosynthesis; glycine biosynthesis; glycine from L-serine: step 1/1. In terms of biological role, catalyzes the reversible interconversion of serine and glycine with tetrahydrofolate (THF) serving as the one-carbon carrier. This reaction serves as the major source of one-carbon groups required for the biosynthesis of purines, thymidylate, methionine, and other important biomolecules. Also exhibits THF-independent aldolase activity toward beta-hydroxyamino acids, producing glycine and aldehydes, via a retro-aldol mechanism. The chain is Serine hydroxymethyltransferase from Psychrobacter arcticus (strain DSM 17307 / VKM B-2377 / 273-4).